The following is a 520-amino-acid chain: 2-isopropylmalate synthase (520 aa).

The Pyruvate carboxyltransferase domain maps to 12 to 274 (VLIFDTTLRD…TTGIDTTQIM (263 aa)). D21, H209, H211, and N245 together coordinate Mn(2+). Residues 398–520 (RLLSLTVIAG…RLHAQHAAAE (123 aa)) are regulatory domain.

Belongs to the alpha-IPM synthase/homocitrate synthase family. LeuA type 1 subfamily. In terms of assembly, homodimer. Mn(2+) serves as cofactor.

Its subcellular location is the cytoplasm. The catalysed reaction is 3-methyl-2-oxobutanoate + acetyl-CoA + H2O = (2S)-2-isopropylmalate + CoA + H(+). It participates in amino-acid biosynthesis; L-leucine biosynthesis; L-leucine from 3-methyl-2-oxobutanoate: step 1/4. Functionally, catalyzes the condensation of the acetyl group of acetyl-CoA with 3-methyl-2-oxobutanoate (2-ketoisovalerate) to form 3-carboxy-3-hydroxy-4-methylpentanoate (2-isopropylmalate). The polypeptide is 2-isopropylmalate synthase (Methylobacterium nodulans (strain LMG 21967 / CNCM I-2342 / ORS 2060)).